We begin with the raw amino-acid sequence, 131 residues long: Small ribosomal subunit protein uS8 (131 aa).

This sequence belongs to the universal ribosomal protein uS8 family. As to quaternary structure, part of the 30S ribosomal subunit. Contacts proteins S5 and S12.

Functionally, one of the primary rRNA binding proteins, it binds directly to 16S rRNA central domain where it helps coordinate assembly of the platform of the 30S subunit. In Janthinobacterium sp. (strain Marseille) (Minibacterium massiliensis), this protein is Small ribosomal subunit protein uS8.